Here is a 225-residue protein sequence, read N- to C-terminus: T4 protein (225 aa).

The protein belongs to the poxviruses B9 family.

The sequence is that of T4 protein from Rabbit fibroma virus (strain Kasza) (RFV).